Reading from the N-terminus, the 676-residue chain is A-type ATP synthase subunit I (676 aa).

A run of 8 helical transmembrane segments spans residues 341–361 (VFIAIFFPIFFGMMLGDIGYG), 390–410 (AGVMSIIFGFIYGECFGPFIV), 449–469 (ILLFATIVIGIAKILFGFALG), 490–510 (IIGVLGLAMIIFGFAYNVGVF), 538–558 (LNVYYLAALPLLVVWFILFVM), 564–584 (MGAMGVILAVELLTWFGQIMS), 590–610 (AIGLSSVYIAFVINFIGMKLI), and 617–637 (IPIVGAIVLLIGHVGNLILGI).

This sequence belongs to the V-ATPase 116 kDa subunit family. Has multiple subunits with at least A(3), B(3), C, D, E, F, H, I and proteolipid K(x).

The protein localises to the cell membrane. Its function is as follows. Component of the A-type ATP synthase that produces ATP from ADP in the presence of a proton gradient across the membrane. This chain is A-type ATP synthase subunit I, found in Archaeoglobus fulgidus (strain ATCC 49558 / DSM 4304 / JCM 9628 / NBRC 100126 / VC-16).